Here is a 420-residue protein sequence, read N- to C-terminus: Serine--tRNA ligase (420 aa).

Residue 225 to 227 (TLE) coordinates L-serine. Residue 256–258 (RQE) participates in ATP binding. E279 is a binding site for L-serine. ATP is bound at residue 343 to 346 (EVSS). T379 contacts L-serine.

Belongs to the class-II aminoacyl-tRNA synthetase family. Type-1 seryl-tRNA synthetase subfamily. As to quaternary structure, homodimer. The tRNA molecule binds across the dimer.

Its subcellular location is the cytoplasm. The catalysed reaction is tRNA(Ser) + L-serine + ATP = L-seryl-tRNA(Ser) + AMP + diphosphate + H(+). It catalyses the reaction tRNA(Sec) + L-serine + ATP = L-seryl-tRNA(Sec) + AMP + diphosphate + H(+). It functions in the pathway aminoacyl-tRNA biosynthesis; selenocysteinyl-tRNA(Sec) biosynthesis; L-seryl-tRNA(Sec) from L-serine and tRNA(Sec): step 1/1. Catalyzes the attachment of serine to tRNA(Ser). Is also able to aminoacylate tRNA(Sec) with serine, to form the misacylated tRNA L-seryl-tRNA(Sec), which will be further converted into selenocysteinyl-tRNA(Sec). The polypeptide is Serine--tRNA ligase (Mycoplasma pneumoniae (strain ATCC 29342 / M129 / Subtype 1) (Mycoplasmoides pneumoniae)).